Consider the following 445-residue polypeptide: GTPase Der (445 aa).

EngA-type G domains follow at residues 3–167 and 180–353; these read PVIA…YAGQ and IKIA…AAAM. GTP is bound by residues 9–16, 56–60, 119–122, 186–193, 233–237, and 298–301; these read GRPNVGKS, DTGGF, NKAE, DTAGL, and NKWD. Residues 354–438 enclose the KH-like domain; the sequence is SKLPTPKLTR…PLRIEFRSSN (85 aa).

The protein belongs to the TRAFAC class TrmE-Era-EngA-EngB-Septin-like GTPase superfamily. EngA (Der) GTPase family. In terms of assembly, associates with the 50S ribosomal subunit.

Its function is as follows. GTPase that plays an essential role in the late steps of ribosome biogenesis. This Burkholderia cenocepacia (strain ATCC BAA-245 / DSM 16553 / LMG 16656 / NCTC 13227 / J2315 / CF5610) (Burkholderia cepacia (strain J2315)) protein is GTPase Der.